Here is a 232-residue protein sequence, read N- to C-terminus: Large ribosomal subunit protein uL1 (232 aa).

It belongs to the universal ribosomal protein uL1 family. Part of the 50S ribosomal subunit.

In terms of biological role, binds directly to 23S rRNA. The L1 stalk is quite mobile in the ribosome, and is involved in E site tRNA release. Functionally, protein L1 is also a translational repressor protein, it controls the translation of the L11 operon by binding to its mRNA. This is Large ribosomal subunit protein uL1 from Syntrophus aciditrophicus (strain SB).